The primary structure comprises 1404 residues: DNA-directed RNA polymerase subunit beta' (1404 aa).

Cysteine 60, cysteine 62, cysteine 75, and cysteine 78 together coordinate Zn(2+). The Mg(2+) site is built by aspartate 449, aspartate 451, and aspartate 453. 4 residues coordinate Zn(2+): cysteine 778, cysteine 852, cysteine 859, and cysteine 862. The disordered stretch occupies residues 1381–1404 (DRPLEEEEEEEIPQSIADDSDGDE). Residues 1384-1404 (LEEEEEEEIPQSIADDSDGDE) show a composition bias toward acidic residues.

The protein belongs to the RNA polymerase beta' chain family. The RNAP catalytic core consists of 2 alpha, 1 beta, 1 beta' and 1 omega subunit. When a sigma factor is associated with the core the holoenzyme is formed, which can initiate transcription. Requires Mg(2+) as cofactor. Zn(2+) serves as cofactor.

It carries out the reaction RNA(n) + a ribonucleoside 5'-triphosphate = RNA(n+1) + diphosphate. In terms of biological role, DNA-dependent RNA polymerase catalyzes the transcription of DNA into RNA using the four ribonucleoside triphosphates as substrates. The polypeptide is DNA-directed RNA polymerase subunit beta' (Leptospira borgpetersenii serovar Hardjo-bovis (strain JB197)).